Consider the following 457-residue polypeptide: Bifunctional protein GlmU (457 aa).

Residues 1–230 form a pyrophosphorylase region; that stretch reads MSKRYAVVLA…FEESLGVNDR (230 aa). Residues 9-12, Lys-23, Gln-73, and 78-79 each bind UDP-N-acetyl-alpha-D-glucosamine; these read LAAG and GT. Residue Asp-103 coordinates Mg(2+). 4 residues coordinate UDP-N-acetyl-alpha-D-glucosamine: Gly-140, Glu-155, Asn-170, and Asn-228. Mg(2+) is bound at residue Asn-228. The tract at residues 231-251 is linker; sequence IALAEASRLMQRRINENHMRN. The interval 252-457 is N-acetyltransferase; it reads GVTLVNPENT…GYAKHLNHGK (206 aa). Positions 333 and 351 each coordinate UDP-N-acetyl-alpha-D-glucosamine. His-363 functions as the Proton acceptor in the catalytic mechanism. UDP-N-acetyl-alpha-D-glucosamine-binding residues include Tyr-366 and Asn-377. Residues 386-387, Ala-423, and Arg-440 contribute to the acetyl-CoA site; that span reads NY.

This sequence in the N-terminal section; belongs to the N-acetylglucosamine-1-phosphate uridyltransferase family. In the C-terminal section; belongs to the transferase hexapeptide repeat family. As to quaternary structure, homotrimer. Mg(2+) serves as cofactor.

It localises to the cytoplasm. The catalysed reaction is alpha-D-glucosamine 1-phosphate + acetyl-CoA = N-acetyl-alpha-D-glucosamine 1-phosphate + CoA + H(+). It carries out the reaction N-acetyl-alpha-D-glucosamine 1-phosphate + UTP + H(+) = UDP-N-acetyl-alpha-D-glucosamine + diphosphate. The protein operates within nucleotide-sugar biosynthesis; UDP-N-acetyl-alpha-D-glucosamine biosynthesis; N-acetyl-alpha-D-glucosamine 1-phosphate from alpha-D-glucosamine 6-phosphate (route II): step 2/2. Its pathway is nucleotide-sugar biosynthesis; UDP-N-acetyl-alpha-D-glucosamine biosynthesis; UDP-N-acetyl-alpha-D-glucosamine from N-acetyl-alpha-D-glucosamine 1-phosphate: step 1/1. It functions in the pathway bacterial outer membrane biogenesis; LPS lipid A biosynthesis. Functionally, catalyzes the last two sequential reactions in the de novo biosynthetic pathway for UDP-N-acetylglucosamine (UDP-GlcNAc). The C-terminal domain catalyzes the transfer of acetyl group from acetyl coenzyme A to glucosamine-1-phosphate (GlcN-1-P) to produce N-acetylglucosamine-1-phosphate (GlcNAc-1-P), which is converted into UDP-GlcNAc by the transfer of uridine 5-monophosphate (from uridine 5-triphosphate), a reaction catalyzed by the N-terminal domain. The chain is Bifunctional protein GlmU from Listeria monocytogenes serotype 4b (strain F2365).